The primary structure comprises 301 residues: Tetrahydromethanopterin S-methyltransferase subunit E (301 aa).

Helical transmembrane passes span 85-105 (VIFA…TYCI), 130-150 (HTPV…VVSY), 151-171 (IMVA…IWGI), 232-252 (PVTG…TAVF), and 258-278 (LTMG…LIIW).

It belongs to the MtrE family. As to quaternary structure, the complex is composed of 8 subunits; MtrA, MtrB, MtrC, MtrD, MtrE, MtrF, MtrG and MtrH.

The protein localises to the cell membrane. The enzyme catalyses 5-methyl-5,6,7,8-tetrahydromethanopterin + coenzyme M + 2 Na(+)(in) = 5,6,7,8-tetrahydromethanopterin + methyl-coenzyme M + 2 Na(+)(out). Its function is as follows. Part of a complex that catalyzes the formation of methyl-coenzyme M and tetrahydromethanopterin from coenzyme M and methyl-tetrahydromethanopterin. This is an energy-conserving, sodium-ion translocating step. The sequence is that of Tetrahydromethanopterin S-methyltransferase subunit E from Methanococcoides burtonii (strain DSM 6242 / NBRC 107633 / OCM 468 / ACE-M).